Consider the following 718-residue polypeptide: Protein ENHANCED DISEASE RESISTANCE 2 (718 aa).

A PH domain is found at 3-110 (KVVYEGWMVR…WKEKIESVID (108 aa)). The tract at residues 134 to 174 (TGRTASSSDHESQFSAAEDEEDSRRSLMRRTTIGNGPPESV) is disordered. In terms of domain architecture, START spans 180-392 (EFDAELANQN…VAGLREWFSQ (213 aa)). Positions 437–483 (RNSLLMDEDSDDDDEFQIAESEQEPETSKPETDVKRPEEEPAHNIDL) are disordered. A compositionally biased stretch (acidic residues) spans 442 to 461 (MDEDSDDDDEFQIAESEQEP). The segment covering 462 to 479 (ETSKPETDVKRPEEEPAH) has biased composition (basic and acidic residues). The helical transmembrane segment at 664–684 (GVLGLVIGVITSLVVEMAFLV) threads the bilayer.

In terms of tissue distribution, expressed ubiquitously in all tissues and organs, including leaves, roots, flowers, stems and siliques.

The protein resides in the endoplasmic reticulum membrane. Its subcellular location is the cell membrane. It is found in the endosome membrane. Functionally, negative regulator of the salicylic acid- (SA-) mediated resistance to pathogens, including the biotrophic powdery mildew pathogens Golovinomyces cichoracearum and Blumeria graminis, and the downy mildew pathogen Hyaloperonospora parasitica, probably by limiting the initiation of cell death and the establishment of the hypersensitive response (HR). Prevents ethylene-induced senescence. Binds to phosphatidylinositol-4-phosphate (PtdIns(4)P) in vitro. This chain is Protein ENHANCED DISEASE RESISTANCE 2 (EDR2), found in Arabidopsis thaliana (Mouse-ear cress).